The following is a 299-amino-acid chain: tRNA dimethylallyltransferase 2 (299 aa).

9–16 (GPTGVGKT) provides a ligand contact to ATP. 11–16 (TGVGKT) provides a ligand contact to substrate. The tract at residues 34–37 (DSRQ) is interaction with substrate tRNA.

This sequence belongs to the IPP transferase family. Monomer. It depends on Mg(2+) as a cofactor.

The enzyme catalyses adenosine(37) in tRNA + dimethylallyl diphosphate = N(6)-dimethylallyladenosine(37) in tRNA + diphosphate. Catalyzes the transfer of a dimethylallyl group onto the adenine at position 37 in tRNAs that read codons beginning with uridine, leading to the formation of N6-(dimethylallyl)adenosine (i(6)A). This Parabacteroides distasonis (strain ATCC 8503 / DSM 20701 / CIP 104284 / JCM 5825 / NCTC 11152) protein is tRNA dimethylallyltransferase 2.